The primary structure comprises 976 residues: Synaptonemal complex protein 1 (976 aa).

Residues 101-111 (GLSRVYSKLYK) carry the Mediates head to head self-assembly of N-terminal ends motif. The short motif at 117-120 (KKWK) is the Nuclear localization signal element. The tract at residues 206 to 362 (ETRQVYMDLN…CQLTEEKETQ (157 aa)) is interaction with SYCE3. Coiled coils occupy residues 211-316 (YMDL…SIEK), 391-439 (LRTE…LKKV), 499-685 (VKDL…VEKA), and 739-798 (EQEQ…KTQT). The required for pH-induced assembly of C-terminal ends into antiparallel tetramers stretch occupies residues 676–770 (ENLLEEVEKA…LSVKKQLEIE (95 aa)). The short motif at 679-682 (LEEV) is the Nuclear localization signal element. Residues 784-976 (NTATLKEKKD…KLKEAEKLFV (193 aa)) are DNA-binding. The short motif at 880-883 (KKRK) is the Nuclear localization signal element.

Structural component of synaptonemal complexes. Homotetramer that consists of an N-terminal four-helical bundle that bifurcates into two elongated C-terminal dimeric coiled coils. This tetrameric building block potentially self-assembles into a supramolecular zipper-like lattice to mediate meiotic chromosome synapsis. Self-assembly is likely initiated by local proton density at chromosome axis, which is predicted to trigger antiparallel back to back assembly of adjacent C-terminal ends into tetrameric structures that anchor to chromosomal DNA. Then the N-terminal ends are predicted to undergo cooperative antiparallel head to head assembly at the midline of synaptonemal complexes central element to form a zipper-like lattice between properly aligned homologous chromosomes. The nascent synapsis generated by SYCP1 is stabilized through interaction with central element proteins SYCE1 and SYCE2. Interacts (via tetrameric core) with SYCE3; the interaction remodels SYCP1 homotetramers to 2:1 heterotrimers with SYCE3. SYCP1/SYCE3 heterotrimers form lattice assemblies as part of the mature synaptonemal complex via both lateral and head-to-head interactions. Forms a complex with EWSR1, PRDM9, SYCP3 and REC8; complex formation is dependent of phosphorylated form of REC8 and requires PRDM9 bound to hotspot DNA; EWSR1 joins PRDM9 with the chromosomal axis through REC8. Interacts with SPO16. In terms of tissue distribution, testis.

It localises to the nucleus. It is found in the chromosome. The protein resides in the centromere. Its function is as follows. Major component of the transverse filaments of synaptonemal complexes, formed between homologous chromosomes during meiotic prophase. Required for normal assembly of the central element of the synaptonemal complexes. Required for normal centromere pairing during meiosis. Required for normal meiotic chromosome synapsis during oocyte and spermatocyte development and for normal male and female fertility. The chain is Synaptonemal complex protein 1 from Homo sapiens (Human).